The chain runs to 155 residues: MLVTMRLSRSIAVFTLVTYATGLPSLQVIPRGEPQLPLLDPSMTIKEAARKCGDKAQLSCCNRVVKAGDYTSVDEGIGAGLLSNLAGGGSGISSILAFDQCSRLDAQVPVVLLPIQDLLNQHCKQNVACCQKNPGDASSSGVGVSLPCIALGSVA.

The signal sequence occupies residues 1–22 (MLVTMRLSRSIAVFTLVTYATG). 4 disulfides stabilise this stretch: Cys-52–Cys-129, Cys-60–Cys-123, Cys-61–Cys-101, and Cys-130–Cys-148.

This sequence belongs to the fungal hydrophobin family. Self-assembles to form functional amyloid fibrils called rodlets. Self-assembly into fibrillar rodlets occurs spontaneously at hydrophobic:hydrophilic interfaces and the rodlets further associate laterally to form amphipathic monolayers.

Its subcellular location is the secreted. It is found in the spore wall. In terms of biological role, aerial growth, conidiation, and dispersal of filamentous fungi in the environment rely upon a capability of their secreting small amphipathic proteins called hydrophobins (HPBs) with low sequence identity. Class I can self-assemble into an outermost layer of rodlet bundles on aerial cell surfaces, conferring cellular hydrophobicity that supports fungal growth, development and dispersal; whereas Class II form highly ordered films at water-air interfaces through intermolecular interactions but contribute nothing to the rodlet structure. RodC is a class I hydrophobin that, unlike rodA, is not required for rodlet formation. The chain is Class I hydrophobin C from Aspergillus fumigatus (strain ATCC MYA-4609 / CBS 101355 / FGSC A1100 / Af293) (Neosartorya fumigata).